We begin with the raw amino-acid sequence, 304 residues long: tRNA pseudouridine synthase B (304 aa).

Catalysis depends on aspartate 48, which acts as the Nucleophile.

Belongs to the pseudouridine synthase TruB family. Type 1 subfamily.

The enzyme catalyses uridine(55) in tRNA = pseudouridine(55) in tRNA. Functionally, responsible for synthesis of pseudouridine from uracil-55 in the psi GC loop of transfer RNAs. This is tRNA pseudouridine synthase B from Pseudomonas aeruginosa (strain UCBPP-PA14).